Reading from the N-terminus, the 476-residue chain is Glycogen synthase (476 aa).

Lys15 is an ADP-alpha-D-glucose binding site.

The protein belongs to the glycosyltransferase 1 family. Bacterial/plant glycogen synthase subfamily.

It catalyses the reaction [(1-&gt;4)-alpha-D-glucosyl](n) + ADP-alpha-D-glucose = [(1-&gt;4)-alpha-D-glucosyl](n+1) + ADP + H(+). The protein operates within glycan biosynthesis; glycogen biosynthesis. Its function is as follows. Synthesizes alpha-1,4-glucan chains using ADP-glucose. This chain is Glycogen synthase, found in Actinobacillus succinogenes (strain ATCC 55618 / DSM 22257 / CCUG 43843 / 130Z).